The following is a 344-amino-acid chain: Probable dual-specificity RNA methyltransferase RlmN (344 aa).

The Proton acceptor role is filled by Glu83. The region spanning 89–323 (YLDRKTICVS…VSVRRSRGKD (235 aa)) is the Radical SAM core domain. Cys96 and Cys328 are disulfide-bonded. Residues Cys103, Cys107, and Cys110 each coordinate [4Fe-4S] cluster. S-adenosyl-L-methionine contacts are provided by residues 153 to 154 (GE), Ser185, 209 to 211 (SLH), and Asn285. The active-site S-methylcysteine intermediate is the Cys328.

The protein belongs to the radical SAM superfamily. RlmN family. [4Fe-4S] cluster serves as cofactor.

It localises to the cytoplasm. It carries out the reaction adenosine(2503) in 23S rRNA + 2 reduced [2Fe-2S]-[ferredoxin] + 2 S-adenosyl-L-methionine = 2-methyladenosine(2503) in 23S rRNA + 5'-deoxyadenosine + L-methionine + 2 oxidized [2Fe-2S]-[ferredoxin] + S-adenosyl-L-homocysteine. The catalysed reaction is adenosine(37) in tRNA + 2 reduced [2Fe-2S]-[ferredoxin] + 2 S-adenosyl-L-methionine = 2-methyladenosine(37) in tRNA + 5'-deoxyadenosine + L-methionine + 2 oxidized [2Fe-2S]-[ferredoxin] + S-adenosyl-L-homocysteine. In terms of biological role, specifically methylates position 2 of adenine 2503 in 23S rRNA and position 2 of adenine 37 in tRNAs. The polypeptide is Probable dual-specificity RNA methyltransferase RlmN (Deinococcus geothermalis (strain DSM 11300 / CIP 105573 / AG-3a)).